Consider the following 167-residue polypeptide: Male-specific protein scotti (167 aa).

Asn-30, Asn-124, and Asn-148 each carry an N-linked (GlcNAc...) asparagine glycan.

The protein belongs to the male-specific scotti family.

Post-meiotically transcribed gene that has a role in late spermiogenesis; required for actin cone progression during spermatid individualization. The chain is Male-specific protein scotti from Drosophila ananassae (Fruit fly).